The following is a 230-amino-acid chain: uncharacterized protein (230 aa).

It to E.coli HemX N-terminal region.

This is an uncharacterized protein from Haemophilus influenzae (strain ATCC 51907 / DSM 11121 / KW20 / Rd).